The following is a 428-amino-acid chain: MRRFLFSDPDFQTAFKAFLDERRGSPADVDAAVAGVLEAVRTQGIEALLDYSRRFDKVDLTAETIRVTAEEIEAGAAETPADVREAIAFAAARIRAYHSRQRPADQAWTDEAGVELGWRWTPLEAVGVYVPGGRAAYPSTVLMNAVPAQVAGVDRIAMVTPPGKLQPAVLAAAKEAGVTEIWRVGGAQAVAALAYGAGPIQPVDKIVGPGNAYVTAAKRRLYGVVGIDALAGPSEIVVVADNKNNPDWIAADLLSQAEHDPAAQSILITDDEAFAAAVEQAIAERLKTLATGEDAAASWRDHGAVIIAPLDESPALVDAIAPEHVEFALDNPERLSDRVRHAGAIFLGRVTPEAIGDYVAGSNHVLPTSRAARFQSGLSIYDFIKRTSIVKCDPASFAVLGPHTVALAKAEGLPAHALSASVRLPSGD.

NAD(+) is bound by residues Y129, Q188, and N211. 3 residues coordinate substrate: S234, Q256, and H259. Residues Q256 and H259 each coordinate Zn(2+). Catalysis depends on proton acceptor residues E323 and H324. 4 residues coordinate substrate: H324, D357, E411, and H416. Residue D357 participates in Zn(2+) binding. H416 serves as a coordination point for Zn(2+).

The protein belongs to the histidinol dehydrogenase family. The cofactor is Zn(2+).

It catalyses the reaction L-histidinol + 2 NAD(+) + H2O = L-histidine + 2 NADH + 3 H(+). It functions in the pathway amino-acid biosynthesis; L-histidine biosynthesis; L-histidine from 5-phospho-alpha-D-ribose 1-diphosphate: step 9/9. Its function is as follows. Catalyzes the sequential NAD-dependent oxidations of L-histidinol to L-histidinaldehyde and then to L-histidine. This chain is Histidinol dehydrogenase, found in Caulobacter vibrioides (strain ATCC 19089 / CIP 103742 / CB 15) (Caulobacter crescentus).